We begin with the raw amino-acid sequence, 229 residues long: GTP-binding protein Di-Ras3 (229 aa).

GTP contacts are provided by residues 44-51 (GTAGVGKS), 63-69 (RHEYLPT), 91-95 (DSKSG), 152-155 (NKSD), and 182-183 (AK). The short motif at 66–74 (YLPTIENTY) is the Effector region element. Cysteine 226 carries the post-translational modification Cysteine methyl ester. Cysteine 226 carries the S-geranylgeranyl cysteine lipid modification. Positions 227–229 (IIM) are cleaved as a propeptide — removed in mature form.

It belongs to the small GTPase superfamily. Di-Ras family. In terms of tissue distribution, expressed in normal ovarian and breast epithelial cells but not in ovarian and breast cancers.

The protein localises to the cell membrane. This is GTP-binding protein Di-Ras3 (DIRAS3) from Homo sapiens (Human).